The chain runs to 138 residues: Small ribosomal subunit protein uS9c (138 aa).

This sequence belongs to the universal ribosomal protein uS9 family.

It is found in the plastid. The protein resides in the chloroplast. The protein is Small ribosomal subunit protein uS9c (rps9) of Phaeodactylum tricornutum (strain CCAP 1055/1).